A 51-amino-acid chain; its full sequence is UPF0391 membrane protein Mbur_2216 (51 aa).

The next 2 membrane-spanning stretches (helical) occupy residues 1-21 and 31-51; these read MADL…AYVL and MTIA…TILL.

Belongs to the UPF0391 family.

The protein resides in the cell membrane. In Methanococcoides burtonii (strain DSM 6242 / NBRC 107633 / OCM 468 / ACE-M), this protein is UPF0391 membrane protein Mbur_2216.